Here is a 1267-residue protein sequence, read N- to C-terminus: Probable cation-transporting ATPase catp-6 (1267 aa).

Residues 1-32 (MVEAGGARRHRMTLESGDHTLTLFAYRTGPFR) lie on the Extracellular side of the membrane. The chain crosses the membrane as a helical span at residues 33–53 (TILFYALTVLTLGIFRLILHW). Over 54–189 (KQKWDVKMRM…RNEIVVQLRP (136 aa)) the chain is Cytoplasmic. A helical membrane pass occupies residues 190–210 (ILYLLVMEVITPFYVFQIFSV). Over 211-217 (TVWYNDE) the chain is Extracellular. Residues 218 to 238 (YAYYASLIVILSLGSIVMDVY) traverse the membrane as a helical segment. The Cytoplasmic portion of the chain corresponds to 239 to 390 (QIRTQEIRLR…DFRFTKDLFK (152 aa)). A helical membrane pass occupies residues 391-411 (FILFLACISGCGFIYTIIVMI). Over 412–424 (MRGNTLRRIIVRS) the chain is Extracellular. The helical transmembrane segment at 425-445 (LDIITITVPPALPAAMSVGII) threads the bilayer. Residues 446–950 (NAQLRLKKKE…VTSFGIFKYM (505 aa)) lie on the Cytoplasmic side of the membrane. Residue Asp476 is the 4-aspartylphosphate intermediate of the active site. Mg(2+) contacts are provided by Asp891 and Asp895. A helical membrane pass occupies residues 951-971 (AGYSLTQFVTVMHLYWISNIL). The Extracellular segment spans residues 972 to 976 (TDGQF). Residues 977 to 997 (MYIDMFLITMFALLFGNTPAF) form a helical membrane-spanning segment. The Cytoplasmic segment spans residues 998–1013 (YRLAHTPPPTRLLSIA). The helical transmembrane segment at 1014 to 1034 (SMTSVVGQLIIIGVVQFIVFF) threads the bilayer. The Extracellular segment spans residues 1035–1058 (STSQQPWFTPYQPPVDDEVEDKRS). Residues 1059–1079 (MQGTALFCVSMFQYIILALVY) form a helical membrane-spanning segment. The Cytoplasmic segment spans residues 1080 to 1097 (SKGPPFRGNLWSNKPMCA). The chain crosses the membrane as a helical span at residues 1098-1118 (LTIFATLLCLFIVIWPTELVL). Topologically, residues 1119-1132 (KTLGNVELPSLTFR) are extracellular. The helical transmembrane segment at 1133 to 1153 (IFIVIVGAVNAAVSYGFETLF) threads the bilayer. Over 1154 to 1267 (VDFFLLGYWE…EEPEKLERTY (114 aa)) the chain is Cytoplasmic. Residues 1232–1256 (ERLISRIGGEPTWLTNPIPPHSLSE) are disordered.

It belongs to the cation transport ATPase (P-type) (TC 3.A.3) family. Type V subfamily.

The protein resides in the membrane. The catalysed reaction is ATP + H2O = ADP + phosphate + H(+). This chain is Probable cation-transporting ATPase catp-6, found in Caenorhabditis elegans.